A 482-amino-acid polypeptide reads, in one-letter code: Islet cell autoantigen 1-like protein (482 aa).

Positions Ala-44–Glu-247 constitute an AH domain. Disordered stretches follow at residues Thr-365 to His-393 and Ser-427 to Gly-449. Polar residues-rich tracts occupy residues Gln-366 to Ser-385 and His-428 to Gly-449.

The polypeptide is Islet cell autoantigen 1-like protein (ICA1L) (Homo sapiens (Human)).